We begin with the raw amino-acid sequence, 479 residues long: Aspartyl/glutamyl-tRNA(Asn/Gln) amidotransferase subunit B (479 aa).

This sequence belongs to the GatB/GatE family. GatB subfamily. Heterotrimer of A, B and C subunits.

The catalysed reaction is L-glutamyl-tRNA(Gln) + L-glutamine + ATP + H2O = L-glutaminyl-tRNA(Gln) + L-glutamate + ADP + phosphate + H(+). It catalyses the reaction L-aspartyl-tRNA(Asn) + L-glutamine + ATP + H2O = L-asparaginyl-tRNA(Asn) + L-glutamate + ADP + phosphate + 2 H(+). Allows the formation of correctly charged Asn-tRNA(Asn) or Gln-tRNA(Gln) through the transamidation of misacylated Asp-tRNA(Asn) or Glu-tRNA(Gln) in organisms which lack either or both of asparaginyl-tRNA or glutaminyl-tRNA synthetases. The reaction takes place in the presence of glutamine and ATP through an activated phospho-Asp-tRNA(Asn) or phospho-Glu-tRNA(Gln). In Streptococcus suis (strain 98HAH33), this protein is Aspartyl/glutamyl-tRNA(Asn/Gln) amidotransferase subunit B.